The chain runs to 215 residues: Peroxiredoxin 1 (215 aa).

The Thioredoxin domain maps to 2–157; sequence KLLGEKFPSM…ILRALKALQT (156 aa). C44 (cysteine sulfenic acid (-SOH) intermediate) is an active-site residue. R120 is a substrate binding site.

This sequence belongs to the peroxiredoxin family. Prx6 subfamily. As to quaternary structure, homodecamer. Pentamer of dimers that assemble into a ring structure.

It localises to the cytoplasm. It catalyses the reaction a hydroperoxide + [thioredoxin]-dithiol = an alcohol + [thioredoxin]-disulfide + H2O. In terms of biological role, thiol-specific peroxidase that catalyzes the reduction of hydrogen peroxide and organic hydroperoxides to water and alcohols, respectively. Plays a role in cell protection against oxidative stress by detoxifying peroxides. The sequence is that of Peroxiredoxin 1 from Caldanaerobacter subterraneus subsp. tengcongensis (strain DSM 15242 / JCM 11007 / NBRC 100824 / MB4) (Thermoanaerobacter tengcongensis).